The chain runs to 95 residues: Cell division topological specificity factor (95 aa).

This sequence belongs to the MinE family.

In terms of biological role, prevents the cell division inhibition by proteins MinC and MinD at internal division sites while permitting inhibition at polar sites. This ensures cell division at the proper site by restricting the formation of a division septum at the midpoint of the long axis of the cell. This chain is Cell division topological specificity factor, found in Trichodesmium erythraeum (strain IMS101).